Here is a 507-residue protein sequence, read N- to C-terminus: ATP synthase subunit alpha, chloroplastic (507 aa).

170–177 (GDRQTGKT) serves as a coordination point for ATP.

It belongs to the ATPase alpha/beta chains family. In terms of assembly, F-type ATPases have 2 components, CF(1) - the catalytic core - and CF(0) - the membrane proton channel. CF(1) has five subunits: alpha(3), beta(3), gamma(1), delta(1), epsilon(1). CF(0) has four main subunits: a, b, b' and c.

The protein resides in the plastid. It localises to the chloroplast thylakoid membrane. The enzyme catalyses ATP + H2O + 4 H(+)(in) = ADP + phosphate + 5 H(+)(out). In terms of biological role, produces ATP from ADP in the presence of a proton gradient across the membrane. The alpha chain is a regulatory subunit. This is ATP synthase subunit alpha, chloroplastic from Ranunculus macranthus (Large buttercup).